A 520-amino-acid polypeptide reads, in one-letter code: Serine protease Hip1 (520 aa).

The N-terminal stretch at 1–30 is a signal peptide; the sequence is MGMRLSRRDKIARMLLIWAALAAVALVLVG. Cys31 carries N-palmitoyl cysteine lipidation. Cys31 carries the S-diacylglycerol cysteine lipid modification. One can recognise an AB hydrolase-1 domain in the interval 102–497; it reads GSLVINPGGP…TQHTVVFQGD (396 aa). The active-site Nucleophile is the Ser228. Residue Asp463 is part of the active site. The active-site Proton donor is the His490.

Belongs to the peptidase S33 family.

It localises to the cell envelope. The protein localises to the cell membrane. Its function is as follows. Serine protease that promotes pathogenesis by promoting the processing and the extracellular release of the M.bovis heat-shock protein GroEL2. Key immunomodulatory virulence factor, which promotes survival in host macrophages and modulates host immune responses. The polypeptide is Serine protease Hip1 (Mycobacterium bovis (strain ATCC BAA-935 / AF2122/97)).